The following is a 387-amino-acid chain: MEKVVIVDAIRTPMGRSKGGAFRHVRAEDLSAHLMRSLLARNPALEASAIDDIYWGCVQQTLEQGFNIARNASLLAEIPHSVPAVTVNRLCGSSMQALHDAARMIMTGDAQVCMVGGVEHMGHVPMSHGVDFHPGMSRNVAKAAGMMGLTAEMLSRMHGISREMQDQFAARSHARAWAATQSGAFKNEILPTGGHDVDGVLKQYYYDEVIRPETTVEALSALRPAFDPVTGTVTAGTSSALSDGAAAMLVMSESRARELGLTPRARIRSMAVVGCDPSIMGYGPVPASKLALKKAGLTASEIDVFEMNEAFAAQILPCIKDLGLMEQIDEKINLNGGAIALGHPLGCSGARISTTLINLMERKDAQFGLATMCIGLGQGIATVFERV.

The Acyl-thioester intermediate role is filled by Cys91. Active-site proton acceptor residues include His343 and Cys373.

The protein belongs to the thiolase-like superfamily. Thiolase family. As to quaternary structure, heterotetramer of two alpha chains (FadB) and two beta chains (FadA).

Its subcellular location is the cytoplasm. The catalysed reaction is an acyl-CoA + acetyl-CoA = a 3-oxoacyl-CoA + CoA. Its pathway is lipid metabolism; fatty acid beta-oxidation. In terms of biological role, catalyzes the final step of fatty acid oxidation in which acetyl-CoA is released and the CoA ester of a fatty acid two carbons shorter is formed. The protein is 3-ketoacyl-CoA thiolase of Enterobacter sp. (strain 638).